The sequence spans 248 residues: Ubiquinone biosynthesis O-methyltransferase (248 aa).

Positions 41, 72, 93, and 136 each coordinate S-adenosyl-L-methionine.

This sequence belongs to the methyltransferase superfamily. UbiG/COQ3 family.

The catalysed reaction is a 3-demethylubiquinol + S-adenosyl-L-methionine = a ubiquinol + S-adenosyl-L-homocysteine + H(+). It catalyses the reaction a 3-(all-trans-polyprenyl)benzene-1,2-diol + S-adenosyl-L-methionine = a 2-methoxy-6-(all-trans-polyprenyl)phenol + S-adenosyl-L-homocysteine + H(+). The protein operates within cofactor biosynthesis; ubiquinone biosynthesis. O-methyltransferase that catalyzes the 2 O-methylation steps in the ubiquinone biosynthetic pathway. The sequence is that of Ubiquinone biosynthesis O-methyltransferase from Brucella melitensis biotype 2 (strain ATCC 23457).